We begin with the raw amino-acid sequence, 350 residues long: S-adenosylmethionine:tRNA ribosyltransferase-isomerase (350 aa).

Belongs to the QueA family. Monomer.

It localises to the cytoplasm. It catalyses the reaction 7-aminomethyl-7-carbaguanosine(34) in tRNA + S-adenosyl-L-methionine = epoxyqueuosine(34) in tRNA + adenine + L-methionine + 2 H(+). It functions in the pathway tRNA modification; tRNA-queuosine biosynthesis. Transfers and isomerizes the ribose moiety from AdoMet to the 7-aminomethyl group of 7-deazaguanine (preQ1-tRNA) to give epoxyqueuosine (oQ-tRNA). This chain is S-adenosylmethionine:tRNA ribosyltransferase-isomerase, found in Bacillus cereus (strain G9842).